A 547-amino-acid chain; its full sequence is Inositol-tetrakisphosphate 1-kinase 6 (547 aa).

Position 263 (Lys-263) interacts with 1D-myo-inositol 1,3,4-trisphosphate. Positions 317 and 370 each coordinate ATP. In terms of domain architecture, ATP-grasp spans 327–539 (LEGLSAEGRP…FWDAIKQSYE (213 aa)). 1D-myo-inositol 1,3,4-trisphosphate contacts are provided by His-381 and Lys-415. Residues 404–415 (QEYIDHGSKIFK), Ser-430, and Ser-450 each bind ATP. Asp-497, Asp-511, and Asn-513 together coordinate Mg(2+). The 1D-myo-inositol 1,3,4-trisphosphate site is built by Asn-513 and Ser-517.

The protein belongs to the ITPK1 family. Monomer. The cofactor is Mg(2+). Highly expressed in embryos and at lower levels in roots, leaves, flowers and anthers.

It catalyses the reaction 1D-myo-inositol 3,4,5,6-tetrakisphosphate + ATP = 1D-myo-inositol 1,3,4,5,6-pentakisphosphate + ADP + H(+). It carries out the reaction 1D-myo-inositol 1,3,4-trisphosphate + ATP = 1D-myo-inositol 1,3,4,5-tetrakisphosphate + ADP + H(+). The enzyme catalyses 1D-myo-inositol 1,3,4-trisphosphate + ATP = 1D-myo-inositol 1,3,4,6-tetrakisphosphate + ADP + H(+). Kinase that can phosphorylate various inositol polyphosphate such as Ins(3,4,5,6)P4 or Ins(1,3,4)P3 and participates in phytic acid biosynthesis in developing seeds. Phytic acid is the primary storage form of phosphorus in cereal grains and other plant seeds. In Oryza sativa subsp. japonica (Rice), this protein is Inositol-tetrakisphosphate 1-kinase 6 (ITPK6).